Here is a 413-residue protein sequence, read N- to C-terminus: Peptidase T (413 aa).

His81 is a binding site for Zn(2+). The active site involves Asp83. A Zn(2+)-binding site is contributed by Asp143. Residue Glu178 is the Proton acceptor of the active site. 3 residues coordinate Zn(2+): Glu179, Asp201, and His383.

This sequence belongs to the peptidase M20B family. In terms of assembly, homodimer. Requires Zn(2+) as cofactor.

The protein localises to the cytoplasm. It catalyses the reaction Release of the N-terminal residue from a tripeptide.. Inhibited by EDTA, by the reducing agents dithiothreitol and 13-mercaptoethanol, and by the divalent cation Cu(2+). Its function is as follows. Cleaves the N-terminal amino acid of tripeptides. Has a broad specificity for tripeptides with no clear preference for a particular tripeptide. Tripeptides with proline in the second position are an exception and are not hydrolyzed. Does not hydrolyze dipeptides, tetrapeptides, or oligopeptides. In Lactococcus lactis subsp. cremoris (Streptococcus cremoris), this protein is Peptidase T (pepT).